The sequence spans 260 residues: Exosome complex component Rrp42 (260 aa).

This sequence belongs to the RNase PH family. Rrp42 subfamily. In terms of assembly, component of the archaeal exosome complex. Forms a hexameric ring-like arrangement composed of 3 Rrp41-Rrp42 heterodimers. The hexameric ring associates with a trimer of Rrp4 and/or Csl4 subunits.

The protein localises to the cytoplasm. Its function is as follows. Non-catalytic component of the exosome, which is a complex involved in RNA degradation. Contributes to the structuring of the Rrp41 active site. The chain is Exosome complex component Rrp42 from Thermoplasma acidophilum (strain ATCC 25905 / DSM 1728 / JCM 9062 / NBRC 15155 / AMRC-C165).